A 441-amino-acid chain; its full sequence is Protein translocase subunit SecY (441 aa).

10 consecutive transmembrane segments (helical) span residues 18-38, 78-98, 124-144, 157-177, 180-200, 215-235, 272-292, 318-338, 382-402, and 403-423; these read ILFT…PSPG, AVGV…TVVI, IALA…GGLL, IFTL…VMWM, LITE…GIAA, GVVF…VVFV, VIPV…TQLI, LVYI…YVSI, IYLG…AGGT, and VQNL…GLDT.

This sequence belongs to the SecY/SEC61-alpha family. Component of the Sec protein translocase complex. Heterotrimer consisting of SecY, SecE and SecG subunits. The heterotrimers can form oligomers, although 1 heterotrimer is thought to be able to translocate proteins. Interacts with the ribosome. Interacts with SecDF, and other proteins may be involved. Interacts with SecA.

It localises to the cell membrane. In terms of biological role, the central subunit of the protein translocation channel SecYEG. Consists of two halves formed by TMs 1-5 and 6-10. These two domains form a lateral gate at the front which open onto the bilayer between TMs 2 and 7, and are clamped together by SecE at the back. The channel is closed by both a pore ring composed of hydrophobic SecY resides and a short helix (helix 2A) on the extracellular side of the membrane which forms a plug. The plug probably moves laterally to allow the channel to open. The ring and the pore may move independently. This chain is Protein translocase subunit SecY, found in Mycobacterium bovis (strain ATCC BAA-935 / AF2122/97).